Reading from the N-terminus, the 442-residue chain is D-serine dehydratase (442 aa).

Residue K118 is modified to N6-(pyridoxal phosphate)lysine.

This sequence belongs to the serine/threonine dehydratase family. DsdA subfamily. Monomer. Requires pyridoxal 5'-phosphate as cofactor.

It carries out the reaction D-serine = pyruvate + NH4(+). This Escherichia coli (strain K12 / MC4100 / BW2952) protein is D-serine dehydratase.